Reading from the N-terminus, the 1011-residue chain is Phosphoenolpyruvate carboxylase (1011 aa).

Catalysis depends on residues His-207 and Lys-658.

It belongs to the PEPCase type 1 family. It depends on Mg(2+) as a cofactor.

It carries out the reaction oxaloacetate + phosphate = phosphoenolpyruvate + hydrogencarbonate. In terms of biological role, forms oxaloacetate, a four-carbon dicarboxylic acid source for the tricarboxylic acid cycle. The protein is Phosphoenolpyruvate carboxylase (ppc) of Thermosynechococcus vestitus (strain NIES-2133 / IAM M-273 / BP-1).